The sequence spans 209 residues: Thiamine-phosphate synthase 1 (209 aa).

Residues Q39–K43 and N74 contribute to the 4-amino-2-methyl-5-(diphosphooxymethyl)pyrimidine site. The Mg(2+) site is built by D75 and D94. Residue S112 participates in 4-amino-2-methyl-5-(diphosphooxymethyl)pyrimidine binding. Residue T138 to S140 participates in 2-[(2R,5Z)-2-carboxy-4-methylthiazol-5(2H)-ylidene]ethyl phosphate binding. K141 provides a ligand contact to 4-amino-2-methyl-5-(diphosphooxymethyl)pyrimidine. 2-[(2R,5Z)-2-carboxy-4-methylthiazol-5(2H)-ylidene]ethyl phosphate-binding positions include G170 and I190–S191.

The protein belongs to the thiamine-phosphate synthase family. Requires Mg(2+) as cofactor.

The catalysed reaction is 2-[(2R,5Z)-2-carboxy-4-methylthiazol-5(2H)-ylidene]ethyl phosphate + 4-amino-2-methyl-5-(diphosphooxymethyl)pyrimidine + 2 H(+) = thiamine phosphate + CO2 + diphosphate. It catalyses the reaction 2-(2-carboxy-4-methylthiazol-5-yl)ethyl phosphate + 4-amino-2-methyl-5-(diphosphooxymethyl)pyrimidine + 2 H(+) = thiamine phosphate + CO2 + diphosphate. The enzyme catalyses 4-methyl-5-(2-phosphooxyethyl)-thiazole + 4-amino-2-methyl-5-(diphosphooxymethyl)pyrimidine + H(+) = thiamine phosphate + diphosphate. The protein operates within cofactor biosynthesis; thiamine diphosphate biosynthesis; thiamine phosphate from 4-amino-2-methyl-5-diphosphomethylpyrimidine and 4-methyl-5-(2-phosphoethyl)-thiazole: step 1/1. Condenses 4-methyl-5-(beta-hydroxyethyl)thiazole monophosphate (THZ-P) and 2-methyl-4-amino-5-hydroxymethyl pyrimidine pyrophosphate (HMP-PP) to form thiamine monophosphate (TMP). The chain is Thiamine-phosphate synthase 1 from Streptococcus pneumoniae (strain ATCC BAA-255 / R6).